The following is a 618-amino-acid chain: MSPMARTAPVPAATDPAIIRNFCIIAHIDHGKSTLADRMLQSTGVVQARDMKAQYLDRMDIERERGITIKSQAVRMPWEVEGVSYALNMIDTPGHVDFTYEVSRSLAACEGAILLVDAAQGIEAQTLANLYLAMENNLTIIPVLNKIDLPAAQPEKYAAELASLIGGDPEDVLRVSGKTGVGVEALLDKIVRDLPAPEGNPDAPARAMIFDSVYDTYRGVVTYVRVVDGMLHPRERIQMMSTRASHELLEIGVSSPEPTPSKGLGVGEVGYLITGVKDVRQSKVGDTVTNLAKPAAQSLPGYADAKPMVFSGLYPLDGADYPVLRDALEKLMLNDAALVYEPETSAALGFGFRVGFLGLLHLEITRERLEREYNLDLISTAPNVEYEVTLEDKKVVRVTNPSEYPTGKIAEVREPMVSATILAPNEFVGAIMELCQSRRGVMGGMDYLSEDRVEIRYRLPLAEIVFDFFDILKSKTRGYGSLDWKADGEQVADLVKVDIMLQGEQVDAFSAITHREKAYAYGVMMTGKLRELIPRQQFEVPIQAAIGSRIIARESIRAIRKDVLAKCYGGDISRKRKLLEKQKEGKKRMKMVGTVEVPQEAFIAALTTDESKDKAKKK.

The tr-type G domain maps to 17-198; sequence AIIRNFCIIA…KIVRDLPAPE (182 aa). GTP-binding positions include 29–34 and 145–148; these read DHGKST and NKID.

It belongs to the TRAFAC class translation factor GTPase superfamily. Classic translation factor GTPase family. LepA subfamily.

It localises to the cell membrane. It catalyses the reaction GTP + H2O = GDP + phosphate + H(+). Required for accurate and efficient protein synthesis under certain stress conditions. May act as a fidelity factor of the translation reaction, by catalyzing a one-codon backward translocation of tRNAs on improperly translocated ribosomes. Back-translocation proceeds from a post-translocation (POST) complex to a pre-translocation (PRE) complex, thus giving elongation factor G a second chance to translocate the tRNAs correctly. Binds to ribosomes in a GTP-dependent manner. The sequence is that of Elongation factor 4 from Pseudarthrobacter chlorophenolicus (strain ATCC 700700 / DSM 12829 / CIP 107037 / JCM 12360 / KCTC 9906 / NCIMB 13794 / A6) (Arthrobacter chlorophenolicus).